Here is a 343-residue protein sequence, read N- to C-terminus: L-threonine 3-dehydrogenase (343 aa).

Residue cysteine 40 participates in Zn(2+) binding. Catalysis depends on charge relay system residues threonine 42 and histidine 45. Histidine 65, glutamate 66, cysteine 95, cysteine 98, cysteine 101, and cysteine 109 together coordinate Zn(2+). NAD(+) is bound by residues isoleucine 177, aspartate 197, arginine 202, 264–266 (LGI), and 288–289 (IY).

It belongs to the zinc-containing alcohol dehydrogenase family. Homotetramer. Zn(2+) is required as a cofactor.

It localises to the cytoplasm. It carries out the reaction L-threonine + NAD(+) = (2S)-2-amino-3-oxobutanoate + NADH + H(+). The protein operates within amino-acid degradation; L-threonine degradation via oxydo-reductase pathway; glycine from L-threonine: step 1/2. In terms of biological role, catalyzes the NAD(+)-dependent oxidation of L-threonine to 2-amino-3-ketobutyrate. The protein is L-threonine 3-dehydrogenase of Aliivibrio fischeri (strain MJ11) (Vibrio fischeri).